Here is a 614-residue protein sequence, read N- to C-terminus: Phragmoplastin DRP1C (614 aa).

In terms of domain architecture, Dynamin-type G spans 32-301 (WEALPTVAVV…LETVIRQKIP (270 aa)). The G1 motif stretch occupies residues 42–49 (GGQSSGKS). GTP is bound at residue 45-50 (SSGKSS). Residues 68–70 (VTR) form a G2 motif region. Positions 143-146 (DLPG) are G3 motif. Residues 212–215 (TKLD) are G4 motif. GTP contacts are provided by residues 213–218 (KLDIMD) and 243–246 (NRSQ). The interval 242–245 (VNRS) is G5 motif. Residues 499–519 (EPEKEKPNPRNAPAPNADPYS) are disordered. The span at 507-517 (PRNAPAPNADP) shows a compositional bias: low complexity. Residues 523 to 614 (FRKIGSNVSA…RDDIDAVAWK (92 aa)) form the GED domain.

This sequence belongs to the TRAFAC class dynamin-like GTPase superfamily. Dynamin/Fzo/YdjA family. As to quaternary structure, forms homodimer and may homooligomerize and heterooligomerize to form the phragmoplastin complex. Binds to PHIP1. Ubiquitous.

It is found in the cytoplasm. It localises to the cytoskeleton. Its subcellular location is the cell cortex. The protein resides in the cytoplasmic vesicle. The protein localises to the clathrin-coated vesicle. It is found in the phragmoplast. The enzyme catalyses GTP + H2O = GDP + phosphate + H(+). In terms of biological role, microtubule-associated force-producing protein that is targeted to the growing edges of the cell plate during cytokinesis. Also plays a major role in plasma membrane maintenance during pollen maturation. Has a GTPase activity. The polypeptide is Phragmoplastin DRP1C (Arabidopsis thaliana (Mouse-ear cress)).